A 441-amino-acid polypeptide reads, in one-letter code: Amino-acid acetyltransferase (441 aa).

In terms of domain architecture, N-acetyltransferase spans 295–434 (EQVRRATIND…QELYNYQRRS (140 aa)).

It belongs to the acetyltransferase family. ArgA subfamily. In terms of assembly, homohexamer.

It localises to the cytoplasm. The catalysed reaction is L-glutamate + acetyl-CoA = N-acetyl-L-glutamate + CoA + H(+). Its pathway is amino-acid biosynthesis; L-arginine biosynthesis; N(2)-acetyl-L-ornithine from L-glutamate: step 1/4. The sequence is that of Amino-acid acetyltransferase from Yersinia pseudotuberculosis serotype O:1b (strain IP 31758).